The following is a 185-amino-acid chain: Isopentenyl-diphosphate Delta-isomerase (185 aa).

Mn(2+) is bound by residues His-27 and His-34. One can recognise a Nudix hydrolase domain in the interval 32 to 168 (PLHLAFSCHL…PWAFSPWLTL (137 aa)). Cys-69 is an active-site residue. Cys-69 contributes to the Mg(2+) binding site. His-71 provides a ligand contact to Mn(2+). Glu-89 contacts Mg(2+). Positions 118 and 120 each coordinate Mn(2+). Glu-120 is an active-site residue.

It belongs to the IPP isomerase type 1 family. It depends on Mg(2+) as a cofactor. Mn(2+) serves as cofactor.

It is found in the cytoplasm. The enzyme catalyses isopentenyl diphosphate = dimethylallyl diphosphate. It participates in isoprenoid biosynthesis; dimethylallyl diphosphate biosynthesis; dimethylallyl diphosphate from isopentenyl diphosphate: step 1/1. Its function is as follows. Catalyzes the 1,3-allylic rearrangement of the homoallylic substrate isopentenyl (IPP) to its highly electrophilic allylic isomer, dimethylallyl diphosphate (DMAPP). This Leifsonia xyli subsp. xyli (strain CTCB07) protein is Isopentenyl-diphosphate Delta-isomerase.